A 126-amino-acid chain; its full sequence is C2H2-type zinc-finger transcription factor M5 (126 aa).

Disordered stretches follow at residues Ala17–Arg52 and Glu103–Asp126. Polar residues predominate over residues Ser38–Asp48. The C2H2-type 1; degenerate zinc-finger motif lies at Asn51 to Asn76. The segment at Phe83–Asn115 adopts a C2H2-type 2; degenerate zinc-finger fold. Residues Asn115–Asp126 show a composition bias toward basic and acidic residues.

This sequence belongs to the GLI C2H2-type zinc-finger protein family.

The protein localises to the nucleus. In terms of biological role, transcription factor that probably regulates the expression of the gene cluster that mediates the biosynthesis of squalestatin S1 (SQS1, also known as zaragozic acid A), a heavily oxidized fungal polyketide that offers potent cholesterol lowering activity by targeting squalene synthase (SS). This chain is C2H2-type zinc-finger transcription factor M5, found in Phoma sp. (strain ATCC 20986 / MF5453).